Here is a 299-residue protein sequence, read N- to C-terminus: Bifunctional protein FolD 2 (299 aa).

Belongs to the tetrahydrofolate dehydrogenase/cyclohydrolase family. As to quaternary structure, homodimer.

It catalyses the reaction (6R)-5,10-methylene-5,6,7,8-tetrahydrofolate + NADP(+) = (6R)-5,10-methenyltetrahydrofolate + NADPH. The enzyme catalyses (6R)-5,10-methenyltetrahydrofolate + H2O = (6R)-10-formyltetrahydrofolate + H(+). It functions in the pathway one-carbon metabolism; tetrahydrofolate interconversion. In terms of biological role, catalyzes the oxidation of 5,10-methylenetetrahydrofolate to 5,10-methenyltetrahydrofolate and then the hydrolysis of 5,10-methenyltetrahydrofolate to 10-formyltetrahydrofolate. The sequence is that of Bifunctional protein FolD 2 (FOLD2) from Arabidopsis thaliana (Mouse-ear cress).